The following is a 322-amino-acid chain: DNA repair and recombination protein RadA (322 aa).

105-112 (GMYGSGKT) contributes to the ATP binding site.

This sequence belongs to the eukaryotic RecA-like protein family.

Its function is as follows. Involved in DNA repair and in homologous recombination. Binds and assemble on single-stranded DNA to form a nucleoprotein filament. Hydrolyzes ATP in a ssDNA-dependent manner and promotes DNA strand exchange between homologous DNA molecules. The chain is DNA repair and recombination protein RadA from Methanococcus maripaludis (strain C5 / ATCC BAA-1333).